Consider the following 93-residue polypeptide: UPF0358 protein lin1058 (93 aa).

The protein belongs to the UPF0358 family.

The chain is UPF0358 protein lin1058 from Listeria innocua serovar 6a (strain ATCC BAA-680 / CLIP 11262).